The primary structure comprises 504 residues: 26S proteasome non-ATPase regulatory subunit 3 (504 aa).

The PCI domain occupies 254–433 (ARYMYYQGRI…RDGPRYMQSS (180 aa)).

The protein belongs to the proteasome subunit S3 family. As to quaternary structure, the 26S proteasome is composed of a core protease, known as the 20S proteasome, capped at one or both ends by the 19S regulatory complex (RC). The RC is composed of at least 18 different subunits in two subcomplexes, the base and the lid, which form the portions proximal and distal to the 20S proteolytic core, respectively.

In terms of biological role, acts as a regulatory subunit of the 26 proteasome which is involved in the ATP-dependent degradation of ubiquitinated proteins. The polypeptide is 26S proteasome non-ATPase regulatory subunit 3 (rpn-3) (Caenorhabditis elegans).